The sequence spans 340 residues: C5a anaphylatoxin chemotactic receptor 1 (340 aa).

Residues 1 to 30 lie on the Extracellular side of the membrane; it reads TPDYGHYDDKDTLDANTPVDKTSNTLRVPD. Residues 3–11 form a required for CHIPS binding region; that stretch reads DYGHYDDKD. Y4 and Y7 each carry sulfotyrosine. The involved in C5a binding stretch occupies residues 14 to 23; that stretch reads DANTPVDKTS. A helical transmembrane segment spans residues 31–57; sequence ILALVIFAVVFLVGVLRNALVVWVTAF. The Cytoplasmic segment spans residues 58–62; it reads EAKRT. A helical transmembrane segment spans residues 63–86; that stretch reads INAIWFLNLAVADFLSCLALPILF. Residues 87-103 are Extracellular-facing; sequence TSIVQHHHWPFGGAACR. The cysteines at positions 102 and 181 are disulfide-linked. A helical membrane pass occupies residues 104 to 125; the sequence is ILPSLILLNMYASILLLATISA. The Cytoplasmic portion of the chain corresponds to 126-146; that stretch reads DRFLLVFNPIWCQNFRGAGLA. The helical transmembrane segment at 147 to 167 threads the bilayer; that stretch reads WIACAVAWGLALLLTIPSFLY. At 168–193 the chain is on the extracellular side; that stretch reads RVVREEYFPPKVLCGVDHGHDKRRER. Residues 194–219 form a helical membrane-spanning segment; that stretch reads AVAIARLVLGFVWPLLTLTMCYTFLL. Residues 220-235 lie on the Cytoplasmic side of the membrane; sequence LRTWSRRATRSTKTLK. The helical transmembrane segment at 236–258 threads the bilayer; the sequence is VVVAVVASFFIFWLPYQVTGMMM. The Extracellular portion of the chain corresponds to 259–275; the sequence is SFLEPSSPTFLLLKKLD. The helical transmembrane segment at 276–296 threads the bilayer; sequence SLCISFAYINCCINPIIYVVA. The Cytoplasmic portion of the chain corresponds to 297 to 340; that stretch reads GQGFQGRLRKSLPSLLRNVLTEESMVRESKSFTRSTVDTMAQKT. S307, S310, S320, S325, S327, and S331 each carry phosphoserine.

Belongs to the G-protein coupled receptor 1 family. Homodimer. May also form higher-order oligomers. Interacts (when phosphorylated) with ARRB1 and ARRB2; the interaction is associated with internalization of C5aR. Interacts (via N-terminal domain) with S.aureus chemotaxis inhibitory protein (CHIPS); the interaction blocks the receptor and may thus inhibit the immune response. Sulfation plays a critical role in the association of C5aR with C5a, but no significant role in the ability of the receptor to transduce a signal and mobilize calcium in response to a small peptide agonist. Sulfation at Tyr-7 is important for CHIPS binding. In terms of processing, phosphorylated on serine residues in response to C5a binding, resulting in internalization of the receptor and short-term desensitization to C5a.

The protein resides in the cell membrane. It is found in the cytoplasmic vesicle. Functionally, receptor for the chemotactic and inflammatory peptide anaphylatoxin C5a. The ligand interacts with at least two sites on the receptor: a high-affinity site on the extracellular N-terminus, and a second site in the transmembrane region which activates downstream signaling events. Receptor activation stimulates chemotaxis, granule enzyme release, intracellular calcium release and superoxide anion production. The chain is C5a anaphylatoxin chemotactic receptor 1 (C5AR1) from Macaca mulatta (Rhesus macaque).